Consider the following 283-residue polypeptide: Protein FdhE homolog (283 aa).

It belongs to the FdhE family.

It is found in the cytoplasm. Necessary for formate dehydrogenase activity. The sequence is that of Protein FdhE homolog from Aquifex aeolicus (strain VF5).